Consider the following 550-residue polypeptide: Efflux pump DEP3 (550 aa).

Positions 1–33 (MSEQSTLAGPYTEKPGVESQNPTGDGKASFDET) are disordered. 11 helical membrane passes run 44–64 (AIAY…NTIV), 78–98 (LELI…ILLW), 109–129 (WVYI…GAAP), 139–159 (VIAG…VSVL), 172–192 (STVV…AFAA), 199–219 (WGFY…MILF), 242–262 (AVIF…GGVV), 268–288 (GTII…IVLL), 319–339 (FLAS…FQFI), 351–371 (LLPL…LMPK), and 373–393 (GLIP…SALM). Asn-399 carries N-linked (GlcNAc...) asparagine glycosylation. A run of 3 helical transmembrane segments spans residues 410–430 (ILVG…VQSL), 439–459 (AVGA…AICG), and 515–535 (SIWA…WPLF).

This sequence belongs to the major facilitator superfamily. TCR/Tet family.

The protein localises to the cell membrane. Functionally, efflux pump; part of the gene cluster that mediates the biosynthesis of depudecin, a highly oxidized eleven-carbon linear polyketide that acts as a histone deacetylase (HDAC) inhibitor and makes a small contribution to pathogenesis. Is presumed either to be responsible for exporting depudecin, to provide self-protection, or both. This chain is Efflux pump DEP3, found in Fusarium langsethiae.